Reading from the N-terminus, the 299-residue chain is 6-phosphogluconate dehydrogenase, NAD(+)-dependent, decarboxylating (299 aa).

Residues 7–12 (GLGRMG), 67–69 (VPA), and asparagine 95 contribute to the NAD(+) site. Residues asparagine 95, serine 118, and glycine 120 each contribute to the substrate site. Catalysis depends on lysine 169, which acts as the Proton acceptor. 172 to 173 (HN) serves as a coordination point for substrate. The active-site Proton donor is glutamate 176. 2 residues coordinate substrate: tyrosine 177 and arginine 268.

The protein belongs to the 6-phosphogluconate dehydrogenase family. Homotetramer.

The enzyme catalyses 6-phospho-D-gluconate + NAD(+) = D-ribulose 5-phosphate + CO2 + NADH. Its pathway is carbohydrate degradation; pentose phosphate pathway. In terms of biological role, catalyzes the oxidative decarboxylation of 6-phosphogluconate to ribulose 5-phosphate and CO(2), with concomitant reduction of NAD to NADH. This chain is 6-phosphogluconate dehydrogenase, NAD(+)-dependent, decarboxylating, found in Haloferax volcanii (strain ATCC 29605 / DSM 3757 / JCM 8879 / NBRC 14742 / NCIMB 2012 / VKM B-1768 / DS2) (Halobacterium volcanii).